The primary structure comprises 312 residues: Aspartate carbamoyltransferase catalytic subunit (312 aa).

2 residues coordinate carbamoyl phosphate: Arg58 and Thr59. Lys86 provides a ligand contact to L-aspartate. 3 residues coordinate carbamoyl phosphate: Arg108, His136, and Gln139. Positions 169 and 223 each coordinate L-aspartate. Residues Gly264 and Pro265 each contribute to the carbamoyl phosphate site.

This sequence belongs to the aspartate/ornithine carbamoyltransferase superfamily. ATCase family. In terms of assembly, heterododecamer (2C3:3R2) of six catalytic PyrB chains organized as two trimers (C3), and six regulatory PyrI chains organized as three dimers (R2).

The catalysed reaction is carbamoyl phosphate + L-aspartate = N-carbamoyl-L-aspartate + phosphate + H(+). It participates in pyrimidine metabolism; UMP biosynthesis via de novo pathway; (S)-dihydroorotate from bicarbonate: step 2/3. In terms of biological role, catalyzes the condensation of carbamoyl phosphate and aspartate to form carbamoyl aspartate and inorganic phosphate, the committed step in the de novo pyrimidine nucleotide biosynthesis pathway. This chain is Aspartate carbamoyltransferase catalytic subunit, found in Syntrophomonas wolfei subsp. wolfei (strain DSM 2245B / Goettingen).